A 278-amino-acid chain; its full sequence is NADPH-dependent 7-cyano-7-deazaguanine reductase (278 aa).

A substrate-binding site is contributed by 87 to 89; the sequence is IES. 89 to 90 is a binding site for NADPH; sequence SK. The active-site Thioimide intermediate is the Cys-185. Catalysis depends on Asp-192, which acts as the Proton donor. 224–225 is a binding site for substrate; sequence HE. 253-254 lines the NADPH pocket; that stretch reads RG. The disordered stretch occupies residues 255–278; sequence GLDINPYRSTNPTFSVQNHRSFRQ. Positions 261 to 278 are enriched in polar residues; the sequence is YRSTNPTFSVQNHRSFRQ.

Belongs to the GTP cyclohydrolase I family. QueF type 2 subfamily. As to quaternary structure, homodimer.

The protein resides in the cytoplasm. The catalysed reaction is 7-aminomethyl-7-carbaguanine + 2 NADP(+) = 7-cyano-7-deazaguanine + 2 NADPH + 3 H(+). Its pathway is tRNA modification; tRNA-queuosine biosynthesis. Its function is as follows. Catalyzes the NADPH-dependent reduction of 7-cyano-7-deazaguanine (preQ0) to 7-aminomethyl-7-deazaguanine (preQ1). The polypeptide is NADPH-dependent 7-cyano-7-deazaguanine reductase (Coxiella burnetii (strain CbuK_Q154) (Coxiella burnetii (strain Q154))).